Reading from the N-terminus, the 262-residue chain is Taurine import ATP-binding protein TauB (262 aa).

An ABC transporter domain is found at 4–234 (VDHASVFFAA…RFAETGDARS (231 aa)). An ATP-binding site is contributed by 39 to 46 (GASGCGKS).

It belongs to the ABC transporter superfamily. Taurine importer (TC 3.A.1.17.1) family. In terms of assembly, the complex is composed of two ATP-binding proteins (TauB), two transmembrane proteins (TauC) and a solute-binding protein (TauA).

It localises to the cell inner membrane. It catalyses the reaction taurine(out) + ATP + H2O = taurine(in) + ADP + phosphate + H(+). Its function is as follows. Part of the ABC transporter complex TauABC involved in taurine import. Responsible for energy coupling to the transport system. This chain is Taurine import ATP-binding protein TauB, found in Rhizobium johnstonii (strain DSM 114642 / LMG 32736 / 3841) (Rhizobium leguminosarum bv. viciae).